We begin with the raw amino-acid sequence, 360 residues long: Blue-light-activated histidine kinase 1 (360 aa).

The PAS domain maps to 38 to 109 (LFLETTQQTR…KLREGIAAER (72 aa)). Position 85 is an S-4a-FMN cysteine (Cys85). The 55-residue stretch at 109–163 (RYTVVDLLNYRKDGIPFWNAVHVGPIYGEDGTLQYFYGSQWDITDIVAERRKAET) folds into the PAC domain. His173 carries the post-translational modification Phosphohistidine; by autocatalysis. An HWE histidine kinase domain region spans residues 260 to 303 (RSVTALGLALHELATNAVKYGALSVDAGRVEISWSREDGDVTLV).

In terms of processing, FMN binds covalently to cysteine after exposure to blue light and this bond is spontaneously broken in the dark.

It carries out the reaction ATP + protein L-histidine = ADP + protein N-phospho-L-histidine.. Its function is as follows. Photosensitive kinase that is involved in increased bacterial virulence upon exposure to light. The protein is Blue-light-activated histidine kinase 1 of Erythrobacter litoralis (strain HTCC2594).